The chain runs to 317 residues: NADH-ubiquinone oxidoreductase chain 1 (317 aa).

The next 9 membrane-spanning stretches (helical) occupy residues 3-23 (YIELLIMFLSVLLAVAFLTVA), 37-57 (PNAVGYYGILMAIADAAKLLL), 69-89 (LILFVSPMISLISALLCWSVI), 103-123 (GFILTLAISSVGVFGTLLAGW), 141-161 (LISYELVLTTIILLCILIGGT), 173-193 (AIWYGIPLLPLAIIFFIGCVA), 207-227 (SELVSGHMTEYSSSIFVLFFL), 247-267 (GGTGIILGLKANLFAFTYIWV), and 282-302 (LCWMIFLPILFGSAIAVPAYL).

Belongs to the complex I subunit 1 family.

Its subcellular location is the mitochondrion inner membrane. The catalysed reaction is a ubiquinone + NADH + 5 H(+)(in) = a ubiquinol + NAD(+) + 4 H(+)(out). Its function is as follows. Core subunit of the mitochondrial membrane respiratory chain NADH dehydrogenase (Complex I) that is believed to belong to the minimal assembly required for catalysis. Complex I functions in the transfer of electrons from NADH to the respiratory chain. The immediate electron acceptor for the enzyme is believed to be ubiquinone. The protein is NADH-ubiquinone oxidoreductase chain 1 (NAD1) of Candida albicans (strain SC5314 / ATCC MYA-2876) (Yeast).